A 305-amino-acid polypeptide reads, in one-letter code: Mycothiol acetyltransferase (305 aa).

N-acetyltransferase domains follow at residues 10 to 153 and 156 to 305; these read DRLD…LVVP and ISLR…YARA. E38 contacts 1D-myo-inositol 2-(L-cysteinylamino)-2-deoxy-alpha-D-glucopyranoside. 82-84 lines the acetyl-CoA pocket; the sequence is LAV. E183, K225, and E238 together coordinate 1D-myo-inositol 2-(L-cysteinylamino)-2-deoxy-alpha-D-glucopyranoside. Residues 242-244 and 249-255 contribute to the acetyl-CoA site; these read VAI and QGRGLGR. Y276 serves as a coordination point for 1D-myo-inositol 2-(L-cysteinylamino)-2-deoxy-alpha-D-glucopyranoside. 281–286 provides a ligand contact to acetyl-CoA; that stretch reads NESALH.

This sequence belongs to the acetyltransferase family. MshD subfamily. Monomer.

It catalyses the reaction 1D-myo-inositol 2-(L-cysteinylamino)-2-deoxy-alpha-D-glucopyranoside + acetyl-CoA = mycothiol + CoA + H(+). Functionally, catalyzes the transfer of acetyl from acetyl-CoA to desacetylmycothiol (Cys-GlcN-Ins) to form mycothiol. The chain is Mycothiol acetyltransferase from Rhodococcus jostii (strain RHA1).